Here is a 267-residue protein sequence, read N- to C-terminus: Thiazole synthase (267 aa).

The Schiff-base intermediate with DXP role is filled by Lys-110. 1-deoxy-D-xylulose 5-phosphate is bound by residues Gly-171, 197–198, and 219–220; these read AG and NT.

The protein belongs to the ThiG family. Homotetramer. Forms heterodimers with either ThiH or ThiS.

The protein localises to the cytoplasm. The enzyme catalyses [ThiS sulfur-carrier protein]-C-terminal-Gly-aminoethanethioate + 2-iminoacetate + 1-deoxy-D-xylulose 5-phosphate = [ThiS sulfur-carrier protein]-C-terminal Gly-Gly + 2-[(2R,5Z)-2-carboxy-4-methylthiazol-5(2H)-ylidene]ethyl phosphate + 2 H2O + H(+). Its pathway is cofactor biosynthesis; thiamine diphosphate biosynthesis. Functionally, catalyzes the rearrangement of 1-deoxy-D-xylulose 5-phosphate (DXP) to produce the thiazole phosphate moiety of thiamine. Sulfur is provided by the thiocarboxylate moiety of the carrier protein ThiS. In vitro, sulfur can be provided by H(2)S. This chain is Thiazole synthase, found in Maricaulis maris (strain MCS10) (Caulobacter maris).